Reading from the N-terminus, the 237-residue chain is Pyridoxal phosphate homeostasis protein (237 aa).

Lysine 35 bears the N6-(pyridoxal phosphate)lysine mark.

It belongs to the pyridoxal phosphate-binding protein YggS/PROSC family.

Pyridoxal 5'-phosphate (PLP)-binding protein, which is involved in PLP homeostasis. This chain is Pyridoxal phosphate homeostasis protein, found in Haemophilus influenzae (strain ATCC 51907 / DSM 11121 / KW20 / Rd).